Here is a 90-residue protein sequence, read N- to C-terminus: Keratin-associated protein 19-1 (90 aa).

A 26 X 2 AA repeats of G-[YCGS] region spans residues 5–84 (GSYYGGLGYS…CCRPSYNGGY (80 aa)).

This sequence belongs to the KRTAP type 19 family. Interacts with hair keratins. As to expression, detected in the upper portion of the hair cortex.

In the hair cortex, hair keratin intermediate filaments are embedded in an interfilamentous matrix, consisting of hair keratin-associated proteins (KRTAP), which are essential for the formation of a rigid and resistant hair shaft through their extensive disulfide bond cross-linking with abundant cysteine residues of hair keratins. The matrix proteins include the high-sulfur and high-glycine-tyrosine keratins. This chain is Keratin-associated protein 19-1 (KRTAP19-1), found in Homo sapiens (Human).